Reading from the N-terminus, the 533-residue chain is Tyrosine/DOPA decarboxylase 3 (533 aa).

K319 carries the N6-(pyridoxal phosphate)lysine modification.

Belongs to the group II decarboxylase family. Homodimer. The cofactor is pyridoxal 5'-phosphate. As to expression, roots.

The catalysed reaction is L-tyrosine + H(+) = tyramine + CO2. It carries out the reaction L-dopa + H(+) = dopamine + CO2. The enzyme catalyses 5-hydroxy-L-tryptophan + H(+) = serotonin + CO2. Marginally higher substrate specificity for L-DOPA over L-tyrosine. The polypeptide is Tyrosine/DOPA decarboxylase 3 (TYDC3) (Papaver somniferum (Opium poppy)).